Here is a 211-residue protein sequence, read N- to C-terminus: Probable molybdenum cofactor guanylyltransferase (211 aa).

GTP is bound by residues 21 to 23 (LAG), Lys33, Asp84, and Asp116. Asp116 is a binding site for Mg(2+).

Belongs to the MobA family. Mg(2+) serves as cofactor.

The protein localises to the cytoplasm. The enzyme catalyses Mo-molybdopterin + GTP + H(+) = Mo-molybdopterin guanine dinucleotide + diphosphate. Its function is as follows. Transfers a GMP moiety from GTP to Mo-molybdopterin (Mo-MPT) cofactor (Moco or molybdenum cofactor) to form Mo-molybdopterin guanine dinucleotide (Mo-MGD) cofactor. This chain is Probable molybdenum cofactor guanylyltransferase, found in Rhodopirellula baltica (strain DSM 10527 / NCIMB 13988 / SH1).